Reading from the N-terminus, the 1270-residue chain is Nuclear exosome regulator NRDE2 (1270 aa).

Disordered regions lie at residues 1-22 (MFRA…ENPD) and 119-209 (SVKS…HTLM). Positions 119 to 135 (SVKSLNGCQDPPETSQQ) are enriched in polar residues. Over residues 164-184 (QRSRSREKKRRKKERRRKRSS) the composition is skewed to basic residues. Residues 192 to 204 (RSRDRSSRARDTS) show a composition bias toward basic and acidic residues.

It belongs to the NRDE2 family. In terms of assembly, interacts with nrde-3.

It is found in the nucleus. The protein localises to the nucleus speckle. It localises to the nucleolus. Functionally, protein of the nuclear speckles that regulates RNA exosomal degradation. Involved in short interfering RNAs-mediated silencing in nuclei. Functions with nrde-3 in the nuclear RNA-mediated gene silencing (RNAi) pathway to regulate gene expression via inhibition of RNA polymerases I and II during the elongation phase of transcription. Required for exogenous RNAi-induced H3K27 methylation. The chain is Nuclear exosome regulator NRDE2 (nrde-2) from Caenorhabditis elegans.